We begin with the raw amino-acid sequence, 264 residues long: ATP synthase subunit a (264 aa).

6 consecutive transmembrane segments (helical) span residues 29–49 (TWHI…LWLF), 89–109 (VIAP…FMDM), 134–154 (DLNI…YYSI), 177–197 (IPVN…SLAL), 208–228 (LIFI…ALGV), and 235–255 (LIFH…LTIV).

Belongs to the ATPase A chain family. In terms of assembly, F-type ATPases have 2 components, CF(1) - the catalytic core - and CF(0) - the membrane proton channel. CF(1) has five subunits: alpha(3), beta(3), gamma(1), delta(1), epsilon(1). CF(0) has three main subunits: a(1), b(2) and c(9-12). The alpha and beta chains form an alternating ring which encloses part of the gamma chain. CF(1) is attached to CF(0) by a central stalk formed by the gamma and epsilon chains, while a peripheral stalk is formed by the delta and b chains.

The protein resides in the cell inner membrane. Its function is as follows. Key component of the proton channel; it plays a direct role in the translocation of protons across the membrane. This Shewanella sediminis (strain HAW-EB3) protein is ATP synthase subunit a.